Here is a 223-residue protein sequence, read N- to C-terminus: Small ribosomal subunit protein uS3 (223 aa).

The KH type-2 domain maps to 38–106; that stretch reads IKKYLKSKLA…EVHLNIVEIR (69 aa).

The protein belongs to the universal ribosomal protein uS3 family. In terms of assembly, part of the 30S ribosomal subunit. Forms a tight complex with proteins S10 and S14.

Its function is as follows. Binds the lower part of the 30S subunit head. Binds mRNA in the 70S ribosome, positioning it for translation. This Rhodospirillum rubrum (strain ATCC 11170 / ATH 1.1.1 / DSM 467 / LMG 4362 / NCIMB 8255 / S1) protein is Small ribosomal subunit protein uS3.